Here is a 161-residue protein sequence, read N- to C-terminus: Nucleotide-binding protein HCH_04620 (161 aa).

Belongs to the YajQ family.

In terms of biological role, nucleotide-binding protein. This chain is Nucleotide-binding protein HCH_04620, found in Hahella chejuensis (strain KCTC 2396).